We begin with the raw amino-acid sequence, 351 residues long: Fe(3+) ions import ATP-binding protein FbpC (351 aa).

Residues 7-237 (VVLKNICKRF…PKSMFMANFM (231 aa)) enclose the ABC transporter domain. 39–46 (GPSGCGKT) provides a ligand contact to ATP.

This sequence belongs to the ABC transporter superfamily. Fe(3+) ion importer (TC 3.A.1.10) family. In terms of assembly, the complex is composed of two ATP-binding proteins (FbpC), two transmembrane proteins (FbpB) and a solute-binding protein (FbpA).

Its subcellular location is the cell inner membrane. The enzyme catalyses Fe(3+)(out) + ATP + H2O = Fe(3+)(in) + ADP + phosphate + H(+). Part of the ABC transporter complex FbpABC involved in Fe(3+) ions import. Responsible for energy coupling to the transport system. This Vibrio cholerae serotype O1 (strain ATCC 39315 / El Tor Inaba N16961) protein is Fe(3+) ions import ATP-binding protein FbpC.